The primary structure comprises 36 residues: Ostricacin-1 (36 aa).

Disulfide bonds link Cys3–Cys29, Cys8–Cys23, and Cys13–Cys30.

It localises to the secreted. Its function is as follows. Has antibacterial activity against the Gram-positive bacteria S.aureus 1056 MRSA (MIC=1.25 ug/ml) and S.aureus NCTC 4163 (MIC=6.7 ug/ml), and the Gram-negative bacteria E.coli O157:H7 (MIC=0.96 ug/ml) and E.coli 0111 (MIC=6.7 ug/ml). Does not have antifungal activity against the yeast C.albicans 3153A. This Struthio camelus (Common ostrich) protein is Ostricacin-1.